Consider the following 672-residue polypeptide: Iron-phytosiderophore transporter YSL15 (672 aa).

Basic and acidic residues predominate over residues Met-1–Val-11. The interval Met-1 to Pro-27 is disordered. Helical transmembrane passes span Gly-47–Leu-67, Gly-70–Trp-90, Cys-115–Leu-135, Gly-158–Ile-178, Leu-218–Tyr-238, Leu-279–Ile-299, Phe-325–Val-345, Met-390–Phe-410, Val-418–Leu-438, Ile-450–Val-470, Val-504–Phe-524, Ile-556–Leu-576, Phe-602–Trp-622, and Ala-630–Phe-650.

Belongs to the YSL (TC 2.A.67.2) family. In terms of tissue distribution, expressed in root phloem and at low levels in the shoot companion cells.

The protein localises to the cell membrane. In terms of biological role, involved in Fe(3+) uptake from the rhizosphere and phloem transport of iron. Plays an important role in iron homeostasis during the early stages of growth. Transports Fe(3+)-phytosiderophore, but not Fe(3+)- or Fe(2+)-nicotianamine. May not transport other chelated metals. The protein is Iron-phytosiderophore transporter YSL15 (YSL15) of Oryza sativa subsp. japonica (Rice).